Reading from the N-terminus, the 739-residue chain is Phosphoribosylformylglycinamidine synthase subunit PurL (739 aa).

H53 is a catalytic residue. 2 residues coordinate ATP: Y56 and K95. E97 is a Mg(2+) binding site. Residues 98 to 101 and R120 contribute to the substrate site; that span reads SHNH. H99 functions as the Proton acceptor in the catalytic mechanism. A Mg(2+)-binding site is contributed by D121. Q244 is a binding site for substrate. D274 serves as a coordination point for Mg(2+). Residue 318–320 participates in substrate binding; the sequence is ESQ. 2 residues coordinate ATP: D501 and G538. N539 is a binding site for Mg(2+). S541 contacts substrate.

The protein belongs to the FGAMS family. In terms of assembly, monomer. Part of the FGAM synthase complex composed of 1 PurL, 1 PurQ and 2 PurS subunits.

Its subcellular location is the cytoplasm. It carries out the reaction N(2)-formyl-N(1)-(5-phospho-beta-D-ribosyl)glycinamide + L-glutamine + ATP + H2O = 2-formamido-N(1)-(5-O-phospho-beta-D-ribosyl)acetamidine + L-glutamate + ADP + phosphate + H(+). Its pathway is purine metabolism; IMP biosynthesis via de novo pathway; 5-amino-1-(5-phospho-D-ribosyl)imidazole from N(2)-formyl-N(1)-(5-phospho-D-ribosyl)glycinamide: step 1/2. Its function is as follows. Part of the phosphoribosylformylglycinamidine synthase complex involved in the purines biosynthetic pathway. Catalyzes the ATP-dependent conversion of formylglycinamide ribonucleotide (FGAR) and glutamine to yield formylglycinamidine ribonucleotide (FGAM) and glutamate. The FGAM synthase complex is composed of three subunits. PurQ produces an ammonia molecule by converting glutamine to glutamate. PurL transfers the ammonia molecule to FGAR to form FGAM in an ATP-dependent manner. PurS interacts with PurQ and PurL and is thought to assist in the transfer of the ammonia molecule from PurQ to PurL. This Listeria monocytogenes serotype 4b (strain F2365) protein is Phosphoribosylformylglycinamidine synthase subunit PurL.